Reading from the N-terminus, the 145-residue chain is Large ribosomal subunit protein uL16 (145 aa).

It belongs to the universal ribosomal protein uL16 family. Part of the 50S ribosomal subunit.

In terms of biological role, binds 23S rRNA and is also seen to make contacts with the A and possibly P site tRNAs. This Exiguobacterium sp. (strain ATCC BAA-1283 / AT1b) protein is Large ribosomal subunit protein uL16.